A 161-amino-acid polypeptide reads, in one-letter code: Cyclic pyranopterin monophosphate synthase (161 aa).

Substrate contacts are provided by residues 75 to 77 and 113 to 114; these read LCH and ME. Asp-128 is an active-site residue.

This sequence belongs to the MoaC family. Homohexamer; trimer of dimers.

The enzyme catalyses (8S)-3',8-cyclo-7,8-dihydroguanosine 5'-triphosphate = cyclic pyranopterin phosphate + diphosphate. It functions in the pathway cofactor biosynthesis; molybdopterin biosynthesis. In terms of biological role, catalyzes the conversion of (8S)-3',8-cyclo-7,8-dihydroguanosine 5'-triphosphate to cyclic pyranopterin monophosphate (cPMP). The protein is Cyclic pyranopterin monophosphate synthase of Cronobacter sakazakii (strain ATCC BAA-894) (Enterobacter sakazakii).